The primary structure comprises 182 residues: MSDSSKERKKKFTGMVNKQKSEDQQNNSKQADDLDELKTLKERAVQLEDHLRRAVADNENVKRIMQKQISDANDYAVTKFARDMIDSCDNLKRVMEILKDDDPVHEGIKVAYKKIMNDLKKHGIEEIDPIGELFDSNLHQAVVEREDNEKKTGTIVEVLQTGYTIKNRLLRPAMVIISKKNC.

The tract at residues 1-37 is disordered; sequence MSDSSKERKKKFTGMVNKQKSEDQQNNSKQADDLDEL.

Belongs to the GrpE family. In terms of assembly, homodimer.

The protein localises to the cytoplasm. Functionally, participates actively in the response to hyperosmotic and heat shock by preventing the aggregation of stress-denatured proteins, in association with DnaK and GrpE. It is the nucleotide exchange factor for DnaK and may function as a thermosensor. Unfolded proteins bind initially to DnaJ; upon interaction with the DnaJ-bound protein, DnaK hydrolyzes its bound ATP, resulting in the formation of a stable complex. GrpE releases ADP from DnaK; ATP binding to DnaK triggers the release of the substrate protein, thus completing the reaction cycle. Several rounds of ATP-dependent interactions between DnaJ, DnaK and GrpE are required for fully efficient folding. The protein is Protein GrpE of Wolbachia sp. subsp. Brugia malayi (strain TRS).